Consider the following 260-residue polypeptide: Translation initiation factor 2 subunit alpha (260 aa).

In terms of domain architecture, S1 motif spans 12–83; that stretch reads GDLIVGTVHK…KKGHVDASLK (72 aa).

It belongs to the eIF-2-alpha family. As to quaternary structure, heterotrimer composed of an alpha, a beta and a gamma chain.

In terms of biological role, eIF-2 functions in the early steps of protein synthesis by forming a ternary complex with GTP and initiator tRNA. This Methanosphaera stadtmanae (strain ATCC 43021 / DSM 3091 / JCM 11832 / MCB-3) protein is Translation initiation factor 2 subunit alpha.